We begin with the raw amino-acid sequence, 177 residues long: Retrograde regulation protein 1 (177 aa).

Positions 1-24 (MSSIPAGTDPGSCGANFKNDRKRR) are disordered. The region spanning 11 to 96 (GSCGANFKND…TQAVEYISHL (86 aa)) is the bHLH domain. Ser-50 and Ser-52 each carry phosphoserine. 2 disordered regions span residues 52–82 (SNDT…KPNK) and 147–177 (LAAT…GNGS). Thr-60 carries the phosphothreonine modification. A compositionally biased stretch (gly residues) spans 168–177 (GGYGEYGNGS).

Binds DNA as a heterodimer with RTG3.

It is found in the nucleus. Its function is as follows. Required for a novel path of interorganelle communication between mitochondria, peroxisomes and the nucleus, thereby maintaining a functional metabolic interaction between the tricarboxylic acid and glyoxylate cycles. Transcription factor that regulates CIT2 gene expression. Binds to two identical sites oriented as inverted repeats 28 bp apart in a regulatory upstream activation sequence element (UASR) in the CIT2 promoter. The core binding site is 5'-GGTCAC-3'. The protein is Retrograde regulation protein 1 (RTG1) of Saccharomyces cerevisiae (strain ATCC 204508 / S288c) (Baker's yeast).